The following is a 279-amino-acid chain: Putative ABC transporter ATP-binding protein CA_C1368 (279 aa).

The ABC transporter domain occupies 4 to 239 (ISINNVDYIY…KKVLRNINLR (236 aa)). 37–44 (GPNGAGKS) serves as a coordination point for ATP.

Belongs to the ABC transporter superfamily.

The protein localises to the cell membrane. Its function is as follows. Probably part of an ABC transporter complex. Responsible for energy coupling to the transport system. The chain is Putative ABC transporter ATP-binding protein CA_C1368 from Clostridium acetobutylicum (strain ATCC 824 / DSM 792 / JCM 1419 / IAM 19013 / LMG 5710 / NBRC 13948 / NRRL B-527 / VKM B-1787 / 2291 / W).